The primary structure comprises 457 residues: tRNA modification GTPase MnmE (457 aa).

Arg25, Glu87, and Arg126 together coordinate (6S)-5-formyl-5,6,7,8-tetrahydrofolate. The region spanning 223-377 is the TrmE-type G domain; sequence GISTAIIGRP…IEERINNLFF (155 aa). Asn233 is a K(+) binding site. GTP is bound by residues 233 to 238, 252 to 258, and 277 to 280; these read NVGKSS, TDIAGTT, and DTAG. Position 237 (Ser237) interacts with Mg(2+). Positions 252, 254, and 257 each coordinate K(+). Residue Thr258 coordinates Mg(2+). Lys457 is a (6S)-5-formyl-5,6,7,8-tetrahydrofolate binding site.

It belongs to the TRAFAC class TrmE-Era-EngA-EngB-Septin-like GTPase superfamily. TrmE GTPase family. In terms of assembly, homodimer. Heterotetramer of two MnmE and two MnmG subunits. The cofactor is K(+).

The protein resides in the cytoplasm. Its function is as follows. Exhibits a very high intrinsic GTPase hydrolysis rate. Involved in the addition of a carboxymethylaminomethyl (cmnm) group at the wobble position (U34) of certain tRNAs, forming tRNA-cmnm(5)s(2)U34. This is tRNA modification GTPase MnmE from Streptococcus pneumoniae serotype 2 (strain D39 / NCTC 7466).